The chain runs to 766 residues: Nucleolar complex protein 2 (766 aa).

Basic residues predominate over residues 1–12 (MKLATKKIKTLG). Disordered stretches follow at residues 1-73 (MKLA…EELE), 100-154 (DTDD…DEED), and 674-766 (KTGV…LNEW). Positions 14 to 29 (SKPDLSKKKPAKDAIR) are enriched in basic and acidic residues. Positions 33 to 42 (PQTTSETKVT) are enriched in polar residues. A compositionally biased stretch (basic residues) spans 58-67 (KTTKKGFKKS). Residues 100 to 115 (DTDDDDDEEGDEEDKE) are compositionally biased toward acidic residues. Phosphothreonine is present on Thr-101. The span at 130–140 (EKYHKPSKDLE) shows a compositional bias: basic and acidic residues. The segment covering 141–154 (VASDESDFEVDEED) has biased composition (acidic residues). Phosphoserine is present on residues Ser-143, Ser-146, Ser-691, Ser-693, and Ser-705. A compositionally biased stretch (acidic residues) spans 706–720 (DDDDDEDVQEEEEVE). The segment covering 757–766 (IVKDLDLNEW) has biased composition (basic and acidic residues).

Belongs to the NOC2 family.

The protein localises to the nucleus. The chain is Nucleolar complex protein 2 from Drosophila melanogaster (Fruit fly).